A 56-amino-acid chain; its full sequence is Trypsin inhibitor 1 (56 aa).

The N-terminal stretch at methionine 1–serine 25 is a signal peptide. A propeptide spanning residues glycine 26–asparagine 39 is cleaved from the precursor. Residues glycine 40–aspartate 53 constitute a cross-link (cyclopeptide (Gly-Asp)). Residues cysteine 42 and cysteine 50 are joined by a disulfide bond. The propeptide occupies glycine 54–proline 56.

In terms of processing, this is a cyclic peptide.

Inhibits trypsin, cathepsin G, elastase, chymotrypsin and thrombin. Does not inhibit factor Xa. The protein is Trypsin inhibitor 1 of Helianthus annuus (Common sunflower).